Reading from the N-terminus, the 259-residue chain is Type-2Aa cytolytic delta-endotoxin (259 aa).

Belongs to the cyt1/cyt2 endotoxin family. As to quaternary structure, homodimer (protoxin) and monomer (active toxin). Active after proteolytic processing.

Its function is as follows. Kills the larvae of dipteran insects by making pores in the epithelial cell membrane of the insect midgut. The chain is Type-2Aa cytolytic delta-endotoxin (cyt2Aa1) from Bacillus thuringiensis subsp. kyushuensis.